Reading from the N-terminus, the 304-residue chain is Ribosomal RNA small subunit methyltransferase H (304 aa).

S-adenosyl-L-methionine is bound by residues Gly-36 to His-38, Asp-53, Phe-79, Asp-98, and Gln-105.

Belongs to the methyltransferase superfamily. RsmH family.

The protein localises to the cytoplasm. It carries out the reaction cytidine(1402) in 16S rRNA + S-adenosyl-L-methionine = N(4)-methylcytidine(1402) in 16S rRNA + S-adenosyl-L-homocysteine + H(+). Functionally, specifically methylates the N4 position of cytidine in position 1402 (C1402) of 16S rRNA. The polypeptide is Ribosomal RNA small subunit methyltransferase H (Myxococcus xanthus (strain DK1622)).